A 397-amino-acid chain; its full sequence is Phosphoglycerate kinase (397 aa).

Residues 23 to 25, arginine 38, 61 to 64, arginine 122, and arginine 155 each bind substrate; these read DFN and HMGK. Residues lysine 206, glycine 296, glutamate 327, and 353 to 356 contribute to the ATP site; that span reads GGDS.

It belongs to the phosphoglycerate kinase family. As to quaternary structure, monomer.

Its subcellular location is the cytoplasm. The enzyme catalyses (2R)-3-phosphoglycerate + ATP = (2R)-3-phospho-glyceroyl phosphate + ADP. Its pathway is carbohydrate degradation; glycolysis; pyruvate from D-glyceraldehyde 3-phosphate: step 2/5. The sequence is that of Phosphoglycerate kinase from Clostridium perfringens (strain ATCC 13124 / DSM 756 / JCM 1290 / NCIMB 6125 / NCTC 8237 / Type A).